Reading from the N-terminus, the 699-residue chain is Condensin complex subunit 2 (699 aa).

Disordered regions lie at residues 1–35 and 176–203; these read MSTSTPQSGGRRKPETPDSAFLSPATRPQPISAAA and ESQATEDTENQETDTGPQDGRKNPKRRK.

It belongs to the CND2 (condensin subunit 2) family. As to quaternary structure, component of the condensin complex, which contains the XCAP-E/SMC2 and XCAP-C/SMC4 heterodimer, and three non SMC subunits that probably regulate the complex: XCAP-H/NCAPH, XCAP-D2/NCAPD2 and XCAP-G/NCAPG. In terms of processing, phosphorylated by CDK1. Its phosphorylation, as well as that of XCAP-D2 and XCAP-G subunits, activates the condensin complex and is required for chromosome condensation.

The protein resides in the nucleus. It localises to the cytoplasm. Its subcellular location is the chromosome. Functionally, regulatory subunit of the condensin complex, a complex required for conversion of interphase chromatin into mitotic-like condense chromosomes. The condensin complex probably introduces positive supercoils into relaxed DNA in the presence of type I topoisomerases and converts nicked DNA into positive knotted forms in the presence of type II topoisomerase. In Xenopus laevis (African clawed frog), this protein is Condensin complex subunit 2 (ncaph).